Consider the following 407-residue polypeptide: uncharacterized protein (407 aa).

This is an uncharacterized protein from Mycobacterium tuberculosis (strain CDC 1551 / Oshkosh).